The following is a 176-amino-acid chain: Nudix hydrolase 18, mitochondrial (176 aa).

The N-terminal 21 residues, Met-1 to Gln-21, are a transit peptide targeting the mitochondrion. Residues Val-22–Val-153 form the Nudix hydrolase domain. Positions Gly-60 to Gly-81 match the Nudix box motif. Positions 75 and 79 each coordinate Mg(2+).

This sequence belongs to the Nudix hydrolase family. Requires Mg(2+) as cofactor. It depends on Mn(2+) as a cofactor. In terms of tissue distribution, expressed in roots, stems and inflorescences.

It is found in the mitochondrion. In terms of biological role, probably mediates the hydrolysis of some nucleoside diphosphate derivatives. The polypeptide is Nudix hydrolase 18, mitochondrial (NUDT18) (Arabidopsis thaliana (Mouse-ear cress)).